Here is a 577-residue protein sequence, read N- to C-terminus: Beta-glucosidase 30 (577 aa).

An N-terminal signal peptide occupies residues 1 to 23; the sequence is MAKGSWFFIILFIISMLENMINS. A beta-D-glucoside is bound by residues Gln-45, His-148, and 193-194; that span reads NE. Glu-194 functions as the Proton donor in the catalytic mechanism. The cysteines at positions 213 and 221 are disulfide-linked. Residue Asn-328 is glycosylated (N-linked (GlcNAc...) asparagine). Residue Tyr-338 participates in a beta-D-glucoside binding. Asn-368 carries N-linked (GlcNAc...) asparagine glycosylation. Residues Glu-410, Trp-460, 467–468, and Phe-476 contribute to the a beta-D-glucoside site; that span reads EW. The Nucleophile role is filled by Glu-410. N-linked (GlcNAc...) asparagine glycosylation is found at Asn-524 and Asn-544.

It belongs to the glycosyl hydrolase 1 family.

The catalysed reaction is Hydrolysis of terminal, non-reducing beta-D-glucosyl residues with release of beta-D-glucose.. The chain is Beta-glucosidase 30 from Arabidopsis thaliana (Mouse-ear cress).